The following is a 709-amino-acid chain: Nucleobase-ascorbate transporter 12 (709 aa).

The disordered stretch occupies residues 1–145; the sequence is MSSSDPKPGP…GSGDPVRRPG (145 aa). A compositionally biased stretch (pro residues) spans 7–19; it reads KPGPKPGPWPPTP. S40 bears the Phosphoserine mark. The span at 41-53 shows a compositional bias: polar residues; sequence GETTATDSSSGQL. Basic and acidic residues-rich tracts occupy residues 89-98 and 113-122; these read ETDKDKKEKP and QPVKRRRDSD. The next 12 helical transmembrane spans lie at 190–210, 218–238, 240–260, 283–303, 308–328, 329–349, 361–381, 438–458, 530–550, 551–571, 585–605, and 639–659; these read YLSM…AMGG, VVST…SFGS, LPLI…IINS, IIIG…SLIL, PVVV…YGFP, LVGK…IFAL, IFLI…AFLL, WGVP…SVIA, GACV…LASI, PQVM…ALGL, IIIV…FQQY, and YVMN…AVIL.

The protein belongs to the nucleobase:cation symporter-2 (NCS2) (TC 2.A.40) family. As to expression, ubiquitous.

The protein resides in the cell membrane. The protein is Nucleobase-ascorbate transporter 12 (NAT12) of Arabidopsis thaliana (Mouse-ear cress).